A 245-amino-acid chain; its full sequence is 23S rRNA (guanosine-2'-O-)-methyltransferase RlmB (245 aa).

Residues Gly197, Ile217, and Leu226 each contribute to the S-adenosyl-L-methionine site.

This sequence belongs to the class IV-like SAM-binding methyltransferase superfamily. RNA methyltransferase TrmH family. RlmB subfamily.

It localises to the cytoplasm. It carries out the reaction guanosine(2251) in 23S rRNA + S-adenosyl-L-methionine = 2'-O-methylguanosine(2251) in 23S rRNA + S-adenosyl-L-homocysteine + H(+). Specifically methylates the ribose of guanosine 2251 in 23S rRNA. This Photobacterium profundum (strain SS9) protein is 23S rRNA (guanosine-2'-O-)-methyltransferase RlmB.